The following is a 408-amino-acid chain: Argininosuccinate synthase (408 aa).

Residues 14-22 (AYSGGLDTS) and alanine 41 each bind ATP. Residues tyrosine 92 and serine 97 each contribute to the L-citrulline site. Glycine 122 contacts ATP. L-aspartate is bound by residues threonine 124, asparagine 128, and aspartate 129. L-citrulline is bound at residue asparagine 128. L-citrulline is bound by residues arginine 132, serine 181, serine 190, glutamate 266, and tyrosine 278.

Belongs to the argininosuccinate synthase family. Type 1 subfamily. In terms of assembly, homotetramer.

It is found in the cytoplasm. The catalysed reaction is L-citrulline + L-aspartate + ATP = 2-(N(omega)-L-arginino)succinate + AMP + diphosphate + H(+). The protein operates within amino-acid biosynthesis; L-arginine biosynthesis; L-arginine from L-ornithine and carbamoyl phosphate: step 2/3. This Pelobacter propionicus (strain DSM 2379 / NBRC 103807 / OttBd1) protein is Argininosuccinate synthase.